A 296-amino-acid chain; its full sequence is MAEETPRYAVVTGANRGIGFEICRQLASEGIRVVLTSRDENRGLEAVETLKKELEISDQSLLFHQLDVADPASITSLAEFVKTQFGKLDILVNNAGIGGIITDAEALRAGAGKEGFKWDEIITETYELTEECIKINYYGPKRMCEAFIPLLKLSDSPRIVNVSSSMGQLKNVLNEWAKGILSDAENLTEERIDQVINQLLNDFKEGTVKEKNWAKFMSAYVVSKASLNGYTRVLAKKHPEFRVNAVCPGFVKTDMNFKTGVLSVEEGASSPVRLALLPHQETPSGCFFSRKQVSEF.

16-40 (RGIGFEICRQLASEGIRVVLTSRDE) contributes to the NADP(+) binding site. A substrate-binding site is contributed by Ser-164. Residue Tyr-220 is the Proton acceptor of the active site.

The protein belongs to the short-chain dehydrogenases/reductases (SDR) family. Monomer.

Its subcellular location is the cytoplasm. It catalyses the reaction (+)-neomenthol + NADP(+) = (1R,4S)-menthone + NADPH + H(+). Functionally, aldehyde reductase that catalyzes the reduction of the aldehyde carbonyl groups on saturated and alpha,beta-unsaturated aldehydes with more than 5 carbons. Involved in basal resistance against pathogens. This Arabidopsis thaliana (Mouse-ear cress) protein is (+)-neomenthol dehydrogenase (SDR1).